Reading from the N-terminus, the 183-residue chain is A-type ATP synthase subunit E (183 aa).

Belongs to the V-ATPase E subunit family. Has multiple subunits, A(3), B(3), C, D, E, F, G, I and K(x); there may be a few other subunits as well.

The protein resides in the cell membrane. In terms of biological role, component of the A-type ATP synthase that produces ATP from ADP in the presence of a proton gradient across the membrane. The protein is A-type ATP synthase subunit E of Methanosarcina mazei (strain ATCC BAA-159 / DSM 3647 / Goe1 / Go1 / JCM 11833 / OCM 88) (Methanosarcina frisia).